A 332-amino-acid chain; its full sequence is Glycerol-3-phosphate dehydrogenase [NAD(P)+] (332 aa).

NADPH is bound by residues tryptophan 11, arginine 30, and lysine 108. 3 residues coordinate sn-glycerol 3-phosphate: lysine 108, glycine 137, and serine 139. Alanine 141 provides a ligand contact to NADPH. Sn-glycerol 3-phosphate contacts are provided by lysine 192, aspartate 245, serine 255, arginine 256, and asparagine 257. Catalysis depends on lysine 192, which acts as the Proton acceptor. Arginine 256 lines the NADPH pocket. The NADPH site is built by valine 280 and glutamate 282.

It belongs to the NAD-dependent glycerol-3-phosphate dehydrogenase family.

The protein localises to the cytoplasm. It carries out the reaction sn-glycerol 3-phosphate + NAD(+) = dihydroxyacetone phosphate + NADH + H(+). The enzyme catalyses sn-glycerol 3-phosphate + NADP(+) = dihydroxyacetone phosphate + NADPH + H(+). The protein operates within membrane lipid metabolism; glycerophospholipid metabolism. In terms of biological role, catalyzes the reduction of the glycolytic intermediate dihydroxyacetone phosphate (DHAP) to sn-glycerol 3-phosphate (G3P), the key precursor for phospholipid synthesis. This Burkholderia lata (strain ATCC 17760 / DSM 23089 / LMG 22485 / NCIMB 9086 / R18194 / 383) protein is Glycerol-3-phosphate dehydrogenase [NAD(P)+].